The sequence spans 132 residues: Translation initiation factor 5A (132 aa).

A Hypusine modification is found at lysine 36.

This sequence belongs to the eIF-5A family.

The protein resides in the cytoplasm. Functionally, functions by promoting the formation of the first peptide bond. The sequence is that of Translation initiation factor 5A (eIF5A) from Pyrobaculum neutrophilum (strain DSM 2338 / JCM 9278 / NBRC 100436 / V24Sta) (Thermoproteus neutrophilus).